We begin with the raw amino-acid sequence, 334 residues long: Fructose-1,6-bisphosphatase class 1 (334 aa).

The Mg(2+) site is built by E90, D113, L115, and D116. Residues 116–119 (DGSS), N209, Y242, and K272 each bind substrate. E278 lines the Mg(2+) pocket.

The protein belongs to the FBPase class 1 family. Homotetramer. Mg(2+) is required as a cofactor.

The protein resides in the cytoplasm. The catalysed reaction is beta-D-fructose 1,6-bisphosphate + H2O = beta-D-fructose 6-phosphate + phosphate. It participates in carbohydrate biosynthesis; gluconeogenesis. In Actinobacillus pleuropneumoniae serotype 7 (strain AP76), this protein is Fructose-1,6-bisphosphatase class 1.